A 104-amino-acid chain; its full sequence is Phosphoribosyl-ATP pyrophosphatase (104 aa).

This sequence belongs to the PRA-PH family.

It localises to the cytoplasm. It carries out the reaction 1-(5-phospho-beta-D-ribosyl)-ATP + H2O = 1-(5-phospho-beta-D-ribosyl)-5'-AMP + diphosphate + H(+). It participates in amino-acid biosynthesis; L-histidine biosynthesis; L-histidine from 5-phospho-alpha-D-ribose 1-diphosphate: step 2/9. This Nitrosococcus oceani (strain ATCC 19707 / BCRC 17464 / JCM 30415 / NCIMB 11848 / C-107) protein is Phosphoribosyl-ATP pyrophosphatase.